A 371-amino-acid chain; its full sequence is DNA replication and repair protein RecF (371 aa).

30–37 contacts ATP; the sequence is GQNGMGKT.

This sequence belongs to the RecF family.

It localises to the cytoplasm. Functionally, the RecF protein is involved in DNA metabolism; it is required for DNA replication and normal SOS inducibility. RecF binds preferentially to single-stranded, linear DNA. It also seems to bind ATP. The chain is DNA replication and repair protein RecF from Phocaeicola vulgatus (strain ATCC 8482 / DSM 1447 / JCM 5826 / CCUG 4940 / NBRC 14291 / NCTC 11154) (Bacteroides vulgatus).